The sequence spans 480 residues: 11S globulin subunit beta (480 aa).

The signal sequence occupies residues 1–21 (MARSSLFTFLCLAVFINGCLS). At Gln-22 the chain carries Pyrrolidone carboxylic acid. 2 disulfide bridges follow: Cys-48/Cys-81 and Cys-124/Cys-303. 2 Cupin type-1 domains span residues 51 to 251 (ENLR…GLVR) and 309 to 458 (QNIG…EEAQ). The Mg(2+) site is built by Lys-408 and Arg-468.

The protein belongs to the 11S seed storage protein (globulins) family. In terms of assembly, hexamer; each subunit is composed of an acidic and a basic chain derived from a single precursor and linked by a disulfide bond.

Its function is as follows. This is a seed storage protein. This is 11S globulin subunit beta from Cucurbita maxima (Pumpkin).